Here is a 128-residue protein sequence, read N- to C-terminus: Large ribosomal subunit protein bL17 (128 aa).

The protein belongs to the bacterial ribosomal protein bL17 family. As to quaternary structure, part of the 50S ribosomal subunit. Contacts protein L32.

The protein is Large ribosomal subunit protein bL17 of Streptococcus equi subsp. zooepidemicus (strain H70).